The chain runs to 131 residues: MHKVQLIIKLLLQLGIIIVITYIGTEIQKIFHLPLAGSIVGLFLFYLLLQFKIVPLTWVEDGANFLLKTMVFFFIPSVVGIMDVASEITLNYILFFAVIIIGTCIVALSSGYIAEKMSVKHKHRKGVDAYE.

4 helical membrane-spanning segments follow: residues 4 to 24 (VQLIIKLLLQLGIIIVITYIG), 30 to 50 (IFHLPLAGSIVGLFLFYLLLQ), 65 to 85 (FLLKTMVFFFIPSVVGIMDVA), and 88 to 108 (ITLNYILFFAVIIIGTCIVAL).

This sequence belongs to the CidA/LrgA family. CidA subfamily.

Its subcellular location is the cell membrane. Functionally, increases the activity of extracellular murein hydrolases possibly by mediating their export via hole formation. Inhibited by the antiholin-like proteins LrgAB. In an unstressed cell, the LrgAB products probably inhibit the function of the CidAB proteins. When a cell is stressed by the addition of antibiotics or by other factors in the environment, the CidAB proteins possibly oligomerize within the bacterial cell membrane, creating lesions that disrupt the proton motive force, which in turn results in loss of cell viability. These lesions are also hypothesized to regulate the subsequent cell lysis by either allowing the murein hydrolases access to the cell wall substrate and/or regulating their activity by a possible change in the cell wall pH that results from loss of membrane potential. The chain is Holin-like protein CidA from Staphylococcus aureus (strain Mu3 / ATCC 700698).